The chain runs to 567 residues: Urease subunit alpha (567 aa).

In terms of domain architecture, Urease spans 129 to 567 (GGVDTHIHWI…LPMAQRYFLF (439 aa)). Residues H134, H136, and K217 each contribute to the Ni(2+) site. N6-carboxylysine is present on K217. H219 provides a ligand contact to substrate. Ni(2+)-binding residues include H246 and H272. Residue H320 is the Proton donor of the active site. D360 contacts Ni(2+).

It belongs to the metallo-dependent hydrolases superfamily. Urease alpha subunit family. In terms of assembly, heterotrimer of UreA (gamma), UreB (beta) and UreC (alpha) subunits. Three heterotrimers associate to form the active enzyme. Ni cation is required as a cofactor. In terms of processing, carboxylation allows a single lysine to coordinate two nickel ions.

It is found in the cytoplasm. The catalysed reaction is urea + 2 H2O + H(+) = hydrogencarbonate + 2 NH4(+). The protein operates within nitrogen metabolism; urea degradation; CO(2) and NH(3) from urea (urease route): step 1/1. This chain is Urease subunit alpha, found in Citrobacter koseri (strain ATCC BAA-895 / CDC 4225-83 / SGSC4696).